We begin with the raw amino-acid sequence, 553 residues long: Solute carrier family 22 member 12 (553 aa).

The helical transmembrane segment at 10-30 (VGGLGRFQLFQTVALVTPILW) threads the bilayer. A glycan (N-linked (GlcNAc...) asparagine) is linked at asparagine 56. 11 consecutive transmembrane segments (helical) span residues 146 to 166 (PMAQ…CGHA), 182 to 202 (LVSV…YCLF), 204 to 224 (FLLA…LMEW), 232 to 252 (LVMT…GSVA), 260 to 280 (MLQL…WWLP), 351 to 371 (IISM…ALDL), 378 to 398 (IFLL…GSLL), 412 to 432 (FLVL…GMGV), 435 to 455 (SALA…ITIF), 466 to 486 (MTAV…GPLV), and 495 to 515 (WMPL…ALLL). Position 534 is a phosphoserine (serine 534). At threonine 542 the chain carries Phosphothreonine.

It belongs to the major facilitator (TC 2.A.1) superfamily. Organic cation transporter (TC 2.A.1.19) family. In terms of assembly, interacts with PDZK1. N-glycosylated. As to expression, detected in kidney (at protein level). Detected in kidney cortex, in proximal tubules.

It localises to the apical cell membrane. The catalysed reaction is urate(out) + (S)-lactate(in) = urate(in) + (S)-lactate(out). It catalyses the reaction nicotinate(in) + urate(out) = nicotinate(out) + urate(in). It carries out the reaction urate(out) + n chloride(in) = urate(in) + n chloride(out). The enzyme catalyses orotate(out) + nicotinate(in) = orotate(in) + nicotinate(out). Its function is as follows. Electroneutral antiporter that translocates urate across the apical membrane of proximal tubular cells in exchange for monovalent organic or inorganic anions. Involved in renal reabsorption of urate and helps maintaining blood levels of uric acid. Mediates urate uptake by an exchange with organic anions such as (S)-lactate and nicotinate, and inorganic anion Cl(-). Other inorganic anions such as Br(-), I(-) and NO3(-) may also act as counteranions that exchange for urate. Also mediates orotate tubular uptake coupled with nicotinate efflux and to a lesser extent with lactate efflux, therefore displaying a potential role in orotate renal reabsorption. Orotate transport is Cl(-)-dependent. This Mus musculus (Mouse) protein is Solute carrier family 22 member 12.